The primary structure comprises 477 residues: ATP synthase subunit beta (477 aa).

148–155 contacts ATP; the sequence is GGAGVGKT.

The protein belongs to the ATPase alpha/beta chains family. As to quaternary structure, F-type ATPases have 2 components, CF(1) - the catalytic core - and CF(0) - the membrane proton channel. CF(1) has five subunits: alpha(3), beta(3), gamma(1), delta(1), epsilon(1). CF(0) has three main subunits: a(1), b(2) and c(9-12). The alpha and beta chains form an alternating ring which encloses part of the gamma chain. CF(1) is attached to CF(0) by a central stalk formed by the gamma and epsilon chains, while a peripheral stalk is formed by the delta and b chains.

Its subcellular location is the cell inner membrane. The catalysed reaction is ATP + H2O + 4 H(+)(in) = ADP + phosphate + 5 H(+)(out). In terms of biological role, produces ATP from ADP in the presence of a proton gradient across the membrane. The catalytic sites are hosted primarily by the beta subunits. The chain is ATP synthase subunit beta from Psychrobacter arcticus (strain DSM 17307 / VKM B-2377 / 273-4).